The chain runs to 326 residues: Deoxyuridine 5'-triphosphate nucleotidohydrolase (326 aa).

Residues 218–220 (RSS) and 321–322 (FG) each bind substrate.

Belongs to the dUTPase family. The cofactor is Mg(2+).

It catalyses the reaction dUTP + H2O = dUMP + diphosphate + H(+). In terms of biological role, involved in nucleotide metabolism: produces dUMP, the immediate precursor of thymidine nucleotides and decreases the intracellular concentration of dUTP to avoid uracil incorporation into viral DNA. This chain is Deoxyuridine 5'-triphosphate nucleotidohydrolase, found in Equus caballus (Horse).